A 708-amino-acid chain; its full sequence is Protein psiF (708 aa).

Positions 1–19 are cleaved as a signal peptide; that stretch reads MKYLFIAIILILYCSFTKA. Residues 20–643 are Extracellular-facing; that stretch reads DQKKFLVNMY…QSTAVKVGVG (624 aa). N-linked (GlcNAc...) asparagine glycosylation is found at Asn78, Asn116, Asn222, Asn317, Asn318, Asn371, Asn498, and Asn600. A PA14 domain is found at 103 to 263; the sequence is TQTAGSQNYY…YDYCGICNGK (161 aa). Residues 644–664 traverse the membrane as a helical segment; it reads IGAAAAAGIAIGGAVAAGLAI. The Cytoplasmic portion of the chain corresponds to 665–708; the sequence is FGGKKAYDTWKTSRGNVMTGSQSNPLYTQNQNNGNNPLYSAPAE. A compositionally biased stretch (polar residues) spans 682-702; the sequence is MTGSQSNPLYTQNQNNGNNPL. A disordered region spans residues 682 to 708; it reads MTGSQSNPLYTQNQNNGNNPLYSAPAE.

It belongs to the prespore-cell-inducing factor family. In terms of assembly, forms a complex with dicB.

Its subcellular location is the membrane. The protein localises to the secreted. Functionally, acts as a quorum sensing protein regulating discoidin gene expression during growth and development. D.discoideum is a single-celled amoebae and switches to multicellular development when food becomes limited. As the growing cells reach a high density, they begin expressing discoidin genes. The ability of psiF/dicA to induce discoidin gene expression when present in conditioned medium, suggests that it allows cells to sense their local density. The protein is Protein psiF (psiF) of Dictyostelium discoideum (Social amoeba).